The primary structure comprises 575 residues: Putative export ATP-binding/permease protein RBE_0492 (575 aa).

The ABC transmembrane type-1 domain maps to 20-303; it reads LIIVIISLLS…IFELLSEMHL (284 aa). The next 6 helical transmembrane spans lie at 21–41, 61–81, 135–155, 158–178, 242–262, and 277–297; these read IIVI…GNVF, ILYI…RSYF, FLSF…LMFF, FKLA…IIKF, ALFF…VIWI, and IISF…IFEL. The ABC transporter domain occupies 336-571; that stretch reads LEFKNVNFSY…SDLYRTIYKE (236 aa). 371–378 provides a ligand contact to ATP; that stretch reads GRSGSGKS.

It belongs to the ABC transporter superfamily. In terms of assembly, homodimer.

It is found in the cell inner membrane. Functionally, part of an ABC transporter complex. Transmembrane domains (TMD) form a pore in the inner membrane and the ATP-binding domain (NBD) is responsible for energy generation. The chain is Putative export ATP-binding/permease protein RBE_0492 from Rickettsia bellii (strain RML369-C).